The chain runs to 550 residues: Chaperonin GroEL (550 aa).

ATP is bound by residues 30–33 (TLGP), Lys51, 87–91 (DGTTT), Gly415, 481–483 (NAA), and Asp497.

This sequence belongs to the chaperonin (HSP60) family. Forms a cylinder of 14 subunits composed of two heptameric rings stacked back-to-back. Interacts with the co-chaperonin GroES.

Its subcellular location is the cytoplasm. It catalyses the reaction ATP + H2O + a folded polypeptide = ADP + phosphate + an unfolded polypeptide.. Functionally, together with its co-chaperonin GroES, plays an essential role in assisting protein folding. The GroEL-GroES system forms a nano-cage that allows encapsulation of the non-native substrate proteins and provides a physical environment optimized to promote and accelerate protein folding. The sequence is that of Chaperonin GroEL from Photobacterium profundum (strain SS9).